Here is a 129-residue protein sequence, read N- to C-terminus: Large ribosomal subunit protein bL12 (129 aa).

It belongs to the bacterial ribosomal protein bL12 family. Homodimer. Part of the ribosomal stalk of the 50S ribosomal subunit. Forms a multimeric L10(L12)X complex, where L10 forms an elongated spine to which 2 to 4 L12 dimers bind in a sequential fashion. Binds GTP-bound translation factors.

Forms part of the ribosomal stalk which helps the ribosome interact with GTP-bound translation factors. Is thus essential for accurate translation. The protein is Large ribosomal subunit protein bL12 of Mycobacteroides abscessus (strain ATCC 19977 / DSM 44196 / CCUG 20993 / CIP 104536 / JCM 13569 / NCTC 13031 / TMC 1543 / L948) (Mycobacterium abscessus).